The sequence spans 358 residues: Isopentenyl-diphosphate delta-isomerase (358 aa).

12 to 13 contacts substrate; it reads RK. Residues 69–71, serine 99, and asparagine 128 each bind FMN; that span reads AMT. Glutamine 158 lines the substrate pocket. Residue glutamate 159 participates in Mg(2+) binding. FMN-binding positions include lysine 190, threonine 220, 267–269, and 288–289; these read GIR and AG.

Belongs to the IPP isomerase type 2 family. Homooctamer. Dimer of tetramers. Requires FMN as cofactor. NADPH is required as a cofactor. Mg(2+) serves as cofactor.

Its subcellular location is the cytoplasm. The catalysed reaction is isopentenyl diphosphate = dimethylallyl diphosphate. Functionally, involved in the biosynthesis of isoprenoids. Catalyzes the 1,3-allylic rearrangement of the homoallylic substrate isopentenyl (IPP) to its allylic isomer, dimethylallyl diphosphate (DMAPP). The protein is Isopentenyl-diphosphate delta-isomerase of Listeria monocytogenes serovar 1/2a (strain ATCC BAA-679 / EGD-e).